The sequence spans 151 residues: MKVILLTEVKKLGKKGDVVEVAEGYGRNYLIAKGLAVEATEGKLKELQQQKEAANRRKEKELQEARSLAEKLKNIELVLYGKGGENGKLFGAITSKDIAEALEKNYQIKIDKRKLDLKENIKALGVYTVEVKLHPEVTAKLKVAVKEEGRG.

It belongs to the bacterial ribosomal protein bL9 family.

Functionally, binds to the 23S rRNA. In Carboxydothermus hydrogenoformans (strain ATCC BAA-161 / DSM 6008 / Z-2901), this protein is Large ribosomal subunit protein bL9.